Consider the following 553-residue polypeptide: Putative transport protein ASA_0825 (553 aa).

The next 5 membrane-spanning stretches (helical) occupy residues 4–24 (IALS…LGNW), 29–49 (VGLG…FAGV), 65–85 (FGLI…FFSS), 95–115 (GFAA…HQLF), and 158–178 (MGYA…MWLV). RCK C-terminal domains lie at 191 to 276 (DLFE…VLGE) and 279 to 361 (ETSL…VVGN). Helical transmembrane passes span 371-391 (MLPV…PFYL), 403-425 (AGGP…LYWF), 439-459 (IVLF…DTLI), 465-485 (AWMM…GVLA), 493-513 (YLTL…LAFA), and 533-553 (LVMF…WAGV).

This sequence belongs to the AAE transporter (TC 2.A.81) family. YidE subfamily.

Its subcellular location is the cell membrane. In Aeromonas salmonicida (strain A449), this protein is Putative transport protein ASA_0825.